The primary structure comprises 316 residues: tRNA-cytidine(32) 2-sulfurtransferase (316 aa).

The PP-loop motif signature appears at 58–63; it reads SGGKDS. The [4Fe-4S] cluster site is built by C133, C136, and C224.

It belongs to the TtcA family. As to quaternary structure, homodimer. The cofactor is Mg(2+). Requires [4Fe-4S] cluster as cofactor.

The protein localises to the cytoplasm. The catalysed reaction is cytidine(32) in tRNA + S-sulfanyl-L-cysteinyl-[cysteine desulfurase] + AH2 + ATP = 2-thiocytidine(32) in tRNA + L-cysteinyl-[cysteine desulfurase] + A + AMP + diphosphate + H(+). Its pathway is tRNA modification. In terms of biological role, catalyzes the ATP-dependent 2-thiolation of cytidine in position 32 of tRNA, to form 2-thiocytidine (s(2)C32). The sulfur atoms are provided by the cysteine/cysteine desulfurase (IscS) system. This is tRNA-cytidine(32) 2-sulfurtransferase from Aromatoleum aromaticum (strain DSM 19018 / LMG 30748 / EbN1) (Azoarcus sp. (strain EbN1)).